The following is a 473-amino-acid chain: Lactate utilization protein B (473 aa).

2 consecutive 4Fe-4S ferredoxin-type domains span residues G302 to Y332 and Y351 to L380. [4Fe-4S] cluster-binding residues include C311, C314, C317, C321, C364, C367, and C371.

Belongs to the LutB/YkgF family.

In terms of biological role, is involved in L-lactate degradation and allows cells to grow with lactate as the sole carbon source. Has probably a role as an electron transporter during oxidation of L-lactate. This Bacillus cereus (strain AH820) protein is Lactate utilization protein B.